Consider the following 354-residue polypeptide: Protein sex-lethal (354 aa).

Residues 1–20 (MYGNNNPGSNNNNGGYPPYG) form a disordered region. RRM domains follow at residues 127 to 205 (TNLI…YARP) and 213 to 293 (TNLY…LAQE).

As to quaternary structure, part of a complex containing fl(2)d, Sxl and vir. Interacts with nito. Interacts with Unr; cooperates with Sxl to prevent translation of msl-2 transcripts. Interacts with how; promoting nuclear retention of msl-2 transcripts. As to expression, the embryo-specific isoform is not expressed in the pole cells, which are the progenitors of the germline.

Its subcellular location is the nucleus. It is found in the cytoplasm. Sex determination switch protein, which controls sexual development and dosage compensation in females. Sxl protein is only active in females: it is inactive in males throughout development. Acts as a mRNA-binding protein, which specifically binds to a subset of pre-mRNAs and mRNAs and regulates their processing and/or translation. Promotes sexual development by controlling the female-specific alternative splicing of the transformer (tra) pre-mRNA: binds tightly to a characteristic uridine-rich polypyrimidine tract at the non-sex specific 3' splice site in one of the tra introns, preventing the general splicing factor U2AF from binding to this site and forcing it to bind to the female-specific 3' splice site. Acts as an inhibitor of dosage compensation in females by preventing production of msl-2 protein, an essential component of the MSL complex, the complex that mediates X-chromosome dosage compensation. Specifially binds to uridine stretches in both the 5'- and 3'-UTR of msl-2 transcripts. Sxl first acts at the splicing level by promoting retention of an intron in the 5' UTR of msl-2 pre-mRNA. The retained intron contains Sxl-binding sites that are required for subsequent steps of repression: after msl-2 mRNA export into the cytoplasm, Sxl coordinates its translational repression by targeting early steps of translation initiation. Together with how, Sxl also prevents production of msl-2 protein by preventing nuclear export of msl-2 transcripts. The chain is Protein sex-lethal from Drosophila subobscura (Fruit fly).